We begin with the raw amino-acid sequence, 154 residues long: Low molecular weight protein-tyrosine-phosphatase PtpA (154 aa).

The Nucleophile role is filled by Cys8. The active site involves Arg14. Asp120 acts as the Proton donor in catalysis.

It belongs to the low molecular weight phosphotyrosine protein phosphatase family. As to quaternary structure, interacts with host CORO1A. Post-translationally, phosphorylations at Tyr-122 and Tyr-123 are essential for phosphatase activity.

The protein resides in the secreted. It carries out the reaction O-phospho-L-tyrosyl-[protein] + H2O = L-tyrosyl-[protein] + phosphate. Functionally, secreted tyrosine phosphatase that plays a critical role during infection as a bacterial effector protein that counteracts host defenses. Required for intramacrophage survival. The chain is Low molecular weight protein-tyrosine-phosphatase PtpA (ptpA) from Staphylococcus aureus (strain bovine RF122 / ET3-1).